A 144-amino-acid polypeptide reads, in one-letter code: Necrosis-inducing secreted protein 1 (144 aa).

Positions 1 to 19 (MQFRASIAAAAGLFALANA) are cleaved as a signal peptide. Residues Asn-88, Asn-126, and Asn-133 are each glycosylated (N-linked (GlcNAc...) asparagine). A BAK1/SERK3-binding region spans residues 103 to 132 (QYVVAAGLYSLYGASSSPTLSHYNVTVTVG).

It belongs to the NIS1 effector family.

It localises to the secreted. The protein resides in the host cytoplasm. Functionally, secreted effector that induces necrotic lesions in Nicotiana benthamiana. Interacts with the host receptor-like kinases (RLKs) BAK1/SERK3 and BKK1/SERK4, inhibits their kinase activity and suppresses INF1-induced pathogen-associated molecular pattern (PAMP)-triggered immunity (PTI) in N.benthamiana. Also interacts with the host receptor-like cytoplasmic kinase (RLCK) BIK1 and inhibits its kinase activity, thereby inhibiting PAMP-induced ROS generation. In PTI, phosphorylation relaying by RLKs and RLCKs is critical for the initiation of downstream signaling. The sequence is that of Necrosis-inducing secreted protein 1 from Colletotrichum higginsianum (strain IMI 349063) (Crucifer anthracnose fungus).